A 115-amino-acid polypeptide reads, in one-letter code: Putative membrane protein insertion efficiency factor (115 aa).

Belongs to the UPF0161 family.

The protein localises to the cell membrane. In terms of biological role, could be involved in insertion of integral membrane proteins into the membrane. The chain is Putative membrane protein insertion efficiency factor from Mycolicibacterium paratuberculosis (strain ATCC BAA-968 / K-10) (Mycobacterium paratuberculosis).